Consider the following 116-residue polypeptide: MKVLVIFAVLSLVIFSNCSAETDEDFFGEESFEADDIIPFIAKEQVRKDKENCIGKHHECTDDRDNCCKGKLFRYQCQCFKVIDGKKETKRCACVTPLHYKMAEMAVSVFKKMFKN.

The first 20 residues, 1–20, serve as a signal peptide directing secretion; the sequence is MKVLVIFAVLSLVIFSNCSA. The propeptide occupies 21-47; it reads ETDEDFFGEESFEADDIIPFIAKEQVR. Intrachain disulfides connect Cys53–Cys68, Cys60–Cys77, Cys67–Cys94, and Cys79–Cys92.

As to expression, expressed by the venom gland.

Its subcellular location is the secreted. It is found in the target cell membrane. Spider venom toxin that shows calcium channel blocking activity and exhibits cytolytic activity by affecting the outer leaflet curvature and/or pore formation across the membrane. It blocks L-type calcium channels (Cav1/CACNA1) in mammalian neurons at nanomolar concentrations. Furthermore, it produces a slow voltage-independent block of mid/low and high voltage-activated calcium channels in cockroach neurons. Potassium ions, histamine, M-ctenitoxin-Cs1a (AC P83619), CSTX-9 (AC P58604), and CSTX-13 (AC P83919) synergistically increase the insecticidal activity of this toxin. In vivo, it causes paralysis in blow flies and provokes death in drosophila. In Cupiennius salei (American wandering spider), this protein is Toxin CSTX-10.